The sequence spans 274 residues: MQIVTSPSELRALRREWKGTVGFVPTMGALHKGHLTLIQKSKAQNEKSIVSIFVNPTQFGENEDFAHYPRKPEADANICQKAGVDILFMPKAEDIYFEGDEVLLKAPQKSGFVLEGAARPGHFDGVLRVVLKLLHLTSPTRAYFGQKDTQQLLLIQKMARELFLPYEIVPCPTERDSDGLALSSRNAYLSEAEKKEALKISASLKEATKHIMTGELQSSQIKERALKVLEGVEVEYFEIVDRNLMPLERIIKGETIILVTARVGKVRLLDNLWI.

Residue 27 to 34 participates in ATP binding; sequence MGALHKGH. Residue His34 is the Proton donor of the active site. Gln58 lines the (R)-pantoate pocket. Gln58 is a binding site for beta-alanine. 145–148 is a binding site for ATP; the sequence is GQKD. Gln151 contributes to the (R)-pantoate binding site. 182-185 is an ATP binding site; it reads LSSR.

The protein belongs to the pantothenate synthetase family. As to quaternary structure, homodimer.

The protein localises to the cytoplasm. It catalyses the reaction (R)-pantoate + beta-alanine + ATP = (R)-pantothenate + AMP + diphosphate + H(+). It participates in cofactor biosynthesis; (R)-pantothenate biosynthesis; (R)-pantothenate from (R)-pantoate and beta-alanine: step 1/1. Its function is as follows. Catalyzes the condensation of pantoate with beta-alanine in an ATP-dependent reaction via a pantoyl-adenylate intermediate. The sequence is that of Pantothenate synthetase from Wolinella succinogenes (strain ATCC 29543 / DSM 1740 / CCUG 13145 / JCM 31913 / LMG 7466 / NCTC 11488 / FDC 602W) (Vibrio succinogenes).